Here is a 659-residue protein sequence, read N- to C-terminus: Biosynthetic arginine decarboxylase (659 aa).

An N6-(pyridoxal phosphate)lysine modification is found at lysine 128. 308–318 (FDVGGGLGVDY) contributes to the substrate binding site.

The protein belongs to the Orn/Lys/Arg decarboxylase class-II family. SpeA subfamily. Mg(2+) is required as a cofactor. Pyridoxal 5'-phosphate serves as cofactor.

The enzyme catalyses L-arginine + H(+) = agmatine + CO2. It functions in the pathway amine and polyamine biosynthesis; agmatine biosynthesis; agmatine from L-arginine: step 1/1. In terms of biological role, catalyzes the biosynthesis of agmatine from arginine. This chain is Biosynthetic arginine decarboxylase, found in Yersinia pestis.